A 153-amino-acid chain; its full sequence is Ubiquitin/ISG15-conjugating enzyme E2 L6 (153 aa).

Residues 2–149 (MASKRVAKEL…AEEFTLKFGV (148 aa)) enclose the UBC core domain. The Glycyl thioester intermediate role is filled by Cys86.

It belongs to the ubiquitin-conjugating enzyme family. As to quaternary structure, interacts with RNF19A, RNF19B and RNF144B. Interacts with FLT3 (tyrosine phosphorylated). ISGylated.

It carries out the reaction S-ubiquitinyl-[E1 ubiquitin-activating enzyme]-L-cysteine + [E2 ubiquitin-conjugating enzyme]-L-cysteine = [E1 ubiquitin-activating enzyme]-L-cysteine + S-ubiquitinyl-[E2 ubiquitin-conjugating enzyme]-L-cysteine.. It functions in the pathway protein modification; protein ubiquitination. Catalyzes the covalent attachment of ubiquitin or ISG15 to other proteins. Functions in the E6/E6-AP-induced ubiquitination of p53/TP53. Promotes ubiquitination and subsequent proteasomal degradation of FLT3. The sequence is that of Ubiquitin/ISG15-conjugating enzyme E2 L6 (Ube2l6) from Mus musculus (Mouse).